Consider the following 347-residue polypeptide: Ribosomal RNA small subunit methyltransferase C (347 aa).

Belongs to the methyltransferase superfamily. RsmC family. Monomer.

The protein localises to the cytoplasm. The enzyme catalyses guanosine(1207) in 16S rRNA + S-adenosyl-L-methionine = N(2)-methylguanosine(1207) in 16S rRNA + S-adenosyl-L-homocysteine + H(+). Specifically methylates the guanine in position 1207 of 16S rRNA in the 30S particle. The polypeptide is Ribosomal RNA small subunit methyltransferase C (Yersinia pseudotuberculosis serotype IB (strain PB1/+)).